A 182-amino-acid chain; its full sequence is Isopentenyl-diphosphate Delta-isomerase (182 aa).

The Mn(2+) site is built by H25 and H32. The region spanning 30-164 is the Nudix hydrolase domain; sequence LLHLAFSSWL…PWAFSPWMVM (135 aa). C67 is a catalytic residue. H69 lines the Mn(2+) pocket. E87 contacts Mg(2+). 2 residues coordinate Mn(2+): E114 and E116. Residue E116 is part of the active site.

The protein belongs to the IPP isomerase type 1 family. As to quaternary structure, homodimer. Mg(2+) is required as a cofactor. It depends on Mn(2+) as a cofactor.

The protein localises to the cytoplasm. The catalysed reaction is isopentenyl diphosphate = dimethylallyl diphosphate. Its pathway is isoprenoid biosynthesis; dimethylallyl diphosphate biosynthesis; dimethylallyl diphosphate from isopentenyl diphosphate: step 1/1. Catalyzes the 1,3-allylic rearrangement of the homoallylic substrate isopentenyl (IPP) to its highly electrophilic allylic isomer, dimethylallyl diphosphate (DMAPP). The sequence is that of Isopentenyl-diphosphate Delta-isomerase from Escherichia coli O7:K1 (strain IAI39 / ExPEC).